The following is a 545-amino-acid chain: Methionine--tRNA ligase (545 aa).

A 'HIGH' region motif is present at residues 15–25 (PYANGPIHIGH). Cysteine 146, cysteine 149, cysteine 159, and cysteine 162 together coordinate Zn(2+). Residues 332–336 (KLSKS) carry the 'KMSKS' region motif. An ATP-binding site is contributed by lysine 335.

The protein belongs to the class-I aminoacyl-tRNA synthetase family. MetG type 1 subfamily. Monomer. Requires Zn(2+) as cofactor.

It localises to the cytoplasm. It catalyses the reaction tRNA(Met) + L-methionine + ATP = L-methionyl-tRNA(Met) + AMP + diphosphate. Its function is as follows. Is required not only for elongation of protein synthesis but also for the initiation of all mRNA translation through initiator tRNA(fMet) aminoacylation. This chain is Methionine--tRNA ligase (metG), found in Buchnera aphidicola subsp. Schizaphis graminum (strain Sg).